The sequence spans 433 residues: 2,2-dialkylglycine decarboxylase (433 aa).

Residue Lys272 is modified to N6-(pyridoxal phosphate)lysine.

This sequence belongs to the class-III pyridoxal-phosphate-dependent aminotransferase family. As to quaternary structure, homotetramer. It depends on pyridoxal 5'-phosphate as a cofactor.

It carries out the reaction 2,2-dialkylglycine + pyruvate + H(+) = dialkyl ketone + L-alanine + CO2. Functionally, the dialkylglycine decarboxylase is of interest because it normally catalyzes both decarboxylation and amino transfer. It may be more properly described as a decarboxylating aminotransferase rather than an aminotransferring decarboxylase. This Burkholderia cepacia (Pseudomonas cepacia) protein is 2,2-dialkylglycine decarboxylase (dgdA).